Reading from the N-terminus, the 148-residue chain is 3-dehydroquinate dehydratase (148 aa).

Tyrosine 23 serves as the catalytic Proton acceptor. Asparagine 75, histidine 81, and aspartate 88 together coordinate substrate. The active-site Proton donor is the histidine 101. Substrate-binding positions include 102–103 and arginine 112; that span reads MS.

It belongs to the type-II 3-dehydroquinase family. Homododecamer.

The catalysed reaction is 3-dehydroquinate = 3-dehydroshikimate + H2O. It participates in metabolic intermediate biosynthesis; chorismate biosynthesis; chorismate from D-erythrose 4-phosphate and phosphoenolpyruvate: step 3/7. Functionally, catalyzes a trans-dehydration via an enolate intermediate. This is 3-dehydroquinate dehydratase from Syntrophotalea carbinolica (strain DSM 2380 / NBRC 103641 / GraBd1) (Pelobacter carbinolicus).